A 179-amino-acid chain; its full sequence is Large ribosomal subunit protein uL5 (179 aa).

Belongs to the universal ribosomal protein uL5 family. As to quaternary structure, part of the 50S ribosomal subunit; part of the 5S rRNA/L5/L18/L25 subcomplex. Contacts the 5S rRNA and the P site tRNA. Forms a bridge to the 30S subunit in the 70S ribosome.

This is one of the proteins that bind and probably mediate the attachment of the 5S RNA into the large ribosomal subunit, where it forms part of the central protuberance. In the 70S ribosome it contacts protein S13 of the 30S subunit (bridge B1b), connecting the 2 subunits; this bridge is implicated in subunit movement. Contacts the P site tRNA; the 5S rRNA and some of its associated proteins might help stabilize positioning of ribosome-bound tRNAs. The protein is Large ribosomal subunit protein uL5 of Dichelobacter nodosus (strain VCS1703A).